Reading from the N-terminus, the 908-residue chain is 26S proteasome non-ATPase regulatory subunit 2 (908 aa).

Met-1 is modified (N-acetylmethionine). The disordered stretch occupies residues Met-1–Leu-52. The span at Pro-10–Pro-21 shows a compositional bias: low complexity. The residue at position 16 (Ser-16) is a Phosphoserine. Thr-24 carries the post-translational modification Phosphothreonine. Positions Thr-24–Leu-52 are enriched in basic and acidic residues. Phosphoserine occurs at positions 29 and 147. The residue at position 194 (Tyr-194) is a Phosphotyrosine. Phosphoserine is present on residues Ser-361 and Ser-363. PC repeat units lie at residues Ser-409–Ser-442, Gly-443–Leu-479, Gly-480–Val-514, Val-517–Lys-551, and Leu-560–Ser-589. N6-acetyllysine is present on Lys-551. Residues Lys-623–Pro-643 show a composition bias toward basic and acidic residues. Residues Lys-623–Asp-645 are disordered. PC repeat units lie at residues Leu-692–Tyr-723 and Ala-742–Asn-757. A required for interaction with UBLCP1 region spans residues Asp-708–Asn-903.

Belongs to the proteasome subunit S2 family. In terms of assembly, component of the 19S proteasome regulatory particle complex. The 26S proteasome consists of a 20S core particle (CP) and two 19S regulatory subunits (RP). The regulatory particle is made of a lid composed of 9 subunits, a base containing 6 ATPases and few additional components including PSMD2. Interacts with RPGRIP1L. Interacts with CRY1 in a KDM8-dependent manner. Interacts (via C-terminus) with phosphatase UBLCP1 (via ubiquitin-like domain); the interaction recruits UBLCP1 to the 19S regulatory particle where it dephosphorylates 19S subunit PSMC2/RPT1 which impairs PSMC2 ATPase activity and disrupts 26S proteasome assembly. As to expression, found in skeletal muscle, liver, heart, brain, kidney, pancreas, lung and placenta.

Component of the 26S proteasome, a multiprotein complex involved in the ATP-dependent degradation of ubiquitinated proteins. This complex plays a key role in the maintenance of protein homeostasis by removing misfolded or damaged proteins, which could impair cellular functions, and by removing proteins whose functions are no longer required. Therefore, the proteasome participates in numerous cellular processes, including cell cycle progression, apoptosis, or DNA damage repair. Functionally, binds to the intracellular domain of tumor necrosis factor type 1 receptor. The binding domain of TRAP1 and TRAP2 resides outside the death domain of TNFR1. The sequence is that of 26S proteasome non-ATPase regulatory subunit 2 (PSMD2) from Homo sapiens (Human).